Here is a 271-residue protein sequence, read N- to C-terminus: Sec-independent protein translocase protein TatC (271 aa).

The next 5 membrane-spanning stretches (helical) occupy residues 24-44, 78-98, 112-132, 159-179, and 215-235; these read ISVGAIIVGFILCYSFSEQIF, FFAGLFLAMPVLFTQMWLFIA, FLFVTPVLFFMGGTLAYYFVF, LVIKLIIAFGITFELPVGLLL, and FTQVMLAIPIMLMYEISIFFG. Residues 247–271 form a disordered region; the sequence is AAEEAQWAADHNVDDDDVDHPEHKA.

Belongs to the TatC family. The Tat system comprises two distinct complexes: a TatABC complex, containing multiple copies of TatA, TatB and TatC subunits, and a separate TatA complex, containing only TatA subunits. Substrates initially bind to the TatABC complex, which probably triggers association of the separate TatA complex to form the active translocon.

It is found in the cell inner membrane. Part of the twin-arginine translocation (Tat) system that transports large folded proteins containing a characteristic twin-arginine motif in their signal peptide across membranes. Together with TatB, TatC is part of a receptor directly interacting with Tat signal peptides. This Magnetococcus marinus (strain ATCC BAA-1437 / JCM 17883 / MC-1) protein is Sec-independent protein translocase protein TatC.